Consider the following 340-residue polypeptide: MHPRNKNAEGYDFAALAATSAALAKHIKTTQAGTASIDFANPAAVKMLNRAILMHHYGVKGWDIPAGYLCPPIPGRADYIHSVADLLATCNKKNIPSGPGVRVLDIGVGANMVYPLIGHAEYGWSFLGVDIDEAALANAQSIIGKNPELASDIELRHQPVWDNIFTGLLRSGEVFDLSICNPPFHNSPDDVHAVSQRKWNNLNKPGAKRGAAEPRLNFGGGGSELWCNGGERAFVKRMIEQSCNIPKRVMWFTSLLSQGDNLPHIEAALKKAKVVESRIIPMAQGQKQSRLVAWTFCGNGEREKWRRERWTAAPSYAVPAFAEQTAPLTAEATPPAADPV.

This sequence belongs to the methyltransferase superfamily. METTL16/RlmF family.

It localises to the cytoplasm. The enzyme catalyses adenosine(1618) in 23S rRNA + S-adenosyl-L-methionine = N(6)-methyladenosine(1618) in 23S rRNA + S-adenosyl-L-homocysteine + H(+). Specifically methylates the adenine in position 1618 of 23S rRNA. This is Ribosomal RNA large subunit methyltransferase F from Dechloromonas aromatica (strain RCB).